The following is a 689-amino-acid chain: DNA ligase (689 aa).

NAD(+) contacts are provided by residues 40–44 (DQEYD), 89–90 (SL), and glutamate 122. The active-site N6-AMP-lysine intermediate is the lysine 124. Arginine 145, glutamate 182, lysine 300, and lysine 325 together coordinate NAD(+). Residues cysteine 419, cysteine 422, cysteine 437, and cysteine 442 each contribute to the Zn(2+) site. The BRCT domain occupies 600–689 (QADGVLTGAT…SADASADASA (90 aa)).

Belongs to the NAD-dependent DNA ligase family. LigA subfamily. Mg(2+) is required as a cofactor. Requires Mn(2+) as cofactor.

It carries out the reaction NAD(+) + (deoxyribonucleotide)n-3'-hydroxyl + 5'-phospho-(deoxyribonucleotide)m = (deoxyribonucleotide)n+m + AMP + beta-nicotinamide D-nucleotide.. DNA ligase that catalyzes the formation of phosphodiester linkages between 5'-phosphoryl and 3'-hydroxyl groups in double-stranded DNA using NAD as a coenzyme and as the energy source for the reaction. It is essential for DNA replication and repair of damaged DNA. The polypeptide is DNA ligase (Gemmatimonas aurantiaca (strain DSM 14586 / JCM 11422 / NBRC 100505 / T-27)).